A 539-amino-acid polypeptide reads, in one-letter code: Phosphoenolpyruvate carboxykinase (ATP) (539 aa).

3 residues coordinate substrate: Arg-64, Tyr-206, and Lys-212. Residues Lys-212, His-231, and 247 to 255 (GLSGTGKTT) each bind ATP. Mn(2+) contacts are provided by Lys-212 and His-231. A Mn(2+)-binding site is contributed by Asp-268. ATP-binding positions include Glu-296, Arg-332, 448 to 449 (RI), and Thr-454. Arg-332 is a binding site for substrate.

Belongs to the phosphoenolpyruvate carboxykinase (ATP) family. Monomer. Mn(2+) is required as a cofactor.

The protein resides in the cytoplasm. The enzyme catalyses oxaloacetate + ATP = phosphoenolpyruvate + ADP + CO2. Its pathway is carbohydrate biosynthesis; gluconeogenesis. Functionally, involved in the gluconeogenesis. Catalyzes the conversion of oxaloacetate (OAA) to phosphoenolpyruvate (PEP) through direct phosphoryl transfer between the nucleoside triphosphate and OAA. The polypeptide is Phosphoenolpyruvate carboxykinase (ATP) (Salmonella choleraesuis (strain SC-B67)).